The primary structure comprises 73 residues: Methionyl-tRNA formyltransferase (73 aa).

Belongs to the Fmt family.

It carries out the reaction L-methionyl-tRNA(fMet) + (6R)-10-formyltetrahydrofolate = N-formyl-L-methionyl-tRNA(fMet) + (6S)-5,6,7,8-tetrahydrofolate + H(+). In terms of biological role, attaches a formyl group to the free amino group of methionyl-tRNA(fMet). The formyl group appears to play a dual role in the initiator identity of N-formylmethionyl-tRNA by promoting its recognition by IF2 and preventing the misappropriation of this tRNA by the elongation apparatus. This chain is Methionyl-tRNA formyltransferase (fmt), found in Rickettsia parkeri.